The sequence spans 275 residues: Putative ankyrin repeat protein L715 (275 aa).

ANK repeat units follow at residues 94 to 123 (NINYGLCQAIENYHLKIVELLIDHGADINY), 124 to 153 (NNGLPLNLAVKNGYYDIIELLIEKKVNTND), 155 to 183 (IFQLLTHCCQNNLPNSLRILLKENISIDP), and 184 to 213 (IYSTMVNLCLDNGYAECASILINHNNSDST). The segment at 253-275 (NQDESDVGDDAENDIENDIEDDN) is disordered. The segment covering 255–275 (DESDVGDDAENDIENDIEDDN) has biased composition (acidic residues).

The chain is Putative ankyrin repeat protein L715 from Acanthamoeba polyphaga mimivirus (APMV).